Here is a 51-residue protein sequence, read N- to C-terminus: Large ribosomal subunit protein eL39 (51 aa).

Residues 1 to 22 are disordered; it reads MPSQKSFRTKQKLAKAQKQNRP.

Belongs to the eukaryotic ribosomal protein eL39 family. In terms of assembly, interacts with YIH1.

This Debaryomyces hansenii (strain ATCC 36239 / CBS 767 / BCRC 21394 / JCM 1990 / NBRC 0083 / IGC 2968) (Yeast) protein is Large ribosomal subunit protein eL39 (RPL39).